The chain runs to 247 residues: Phosphatidylserine decarboxylase proenzyme (247 aa).

The Schiff-base intermediate with substrate; via pyruvic acid role is filled by serine 206. The residue at position 206 (serine 206) is a Pyruvic acid (Ser); by autocatalysis.

This sequence belongs to the phosphatidylserine decarboxylase family. PSD-A subfamily. As to quaternary structure, heterodimer of a large membrane-associated beta subunit and a small pyruvoyl-containing alpha subunit. The cofactor is pyruvate. Post-translationally, is synthesized initially as an inactive proenzyme. Formation of the active enzyme involves a self-maturation process in which the active site pyruvoyl group is generated from an internal serine residue via an autocatalytic post-translational modification. Two non-identical subunits are generated from the proenzyme in this reaction, and the pyruvate is formed at the N-terminus of the alpha chain, which is derived from the carboxyl end of the proenzyme. The post-translation cleavage follows an unusual pathway, termed non-hydrolytic serinolysis, in which the side chain hydroxyl group of the serine supplies its oxygen atom to form the C-terminus of the beta chain, while the remainder of the serine residue undergoes an oxidative deamination to produce ammonia and the pyruvoyl prosthetic group on the alpha chain.

It is found in the cell membrane. The catalysed reaction is a 1,2-diacyl-sn-glycero-3-phospho-L-serine + H(+) = a 1,2-diacyl-sn-glycero-3-phosphoethanolamine + CO2. It functions in the pathway phospholipid metabolism; phosphatidylethanolamine biosynthesis; phosphatidylethanolamine from CDP-diacylglycerol: step 2/2. Its function is as follows. Catalyzes the formation of phosphatidylethanolamine (PtdEtn) from phosphatidylserine (PtdSer). In Nitrobacter winogradskyi (strain ATCC 25391 / DSM 10237 / CIP 104748 / NCIMB 11846 / Nb-255), this protein is Phosphatidylserine decarboxylase proenzyme.